We begin with the raw amino-acid sequence, 343 residues long: Probable dual-specificity RNA methyltransferase RlmN (343 aa).

E91 serves as the catalytic Proton acceptor. The 230-residue stretch at 97–326 (HPGRITACIS…AEIRQEKGSD (230 aa)) folds into the Radical SAM core domain. C104 and C331 are oxidised to a cystine. [4Fe-4S] cluster is bound by residues C111, C115, and C118. S-adenosyl-L-methionine-binding positions include 158–159 (GE), S190, 213–215 (SLH), and N289. C331 (S-methylcysteine intermediate) is an active-site residue.

It belongs to the radical SAM superfamily. RlmN family. The cofactor is [4Fe-4S] cluster.

The protein localises to the cytoplasm. It carries out the reaction adenosine(2503) in 23S rRNA + 2 reduced [2Fe-2S]-[ferredoxin] + 2 S-adenosyl-L-methionine = 2-methyladenosine(2503) in 23S rRNA + 5'-deoxyadenosine + L-methionine + 2 oxidized [2Fe-2S]-[ferredoxin] + S-adenosyl-L-homocysteine. It catalyses the reaction adenosine(37) in tRNA + 2 reduced [2Fe-2S]-[ferredoxin] + 2 S-adenosyl-L-methionine = 2-methyladenosine(37) in tRNA + 5'-deoxyadenosine + L-methionine + 2 oxidized [2Fe-2S]-[ferredoxin] + S-adenosyl-L-homocysteine. In terms of biological role, specifically methylates position 2 of adenine 2503 in 23S rRNA and position 2 of adenine 37 in tRNAs. This Thermotoga neapolitana (strain ATCC 49049 / DSM 4359 / NBRC 107923 / NS-E) protein is Probable dual-specificity RNA methyltransferase RlmN.